Consider the following 445-residue polypeptide: POU domain, class 5, transcription factor 1.2 (445 aa).

2 stretches are compositionally biased toward polar residues: residues 76–88 (SANQLGISGQGNP) and 164–182 (IFTSSPDKSGESGISSLDN). Disordered stretches follow at residues 76–116 (SANQ…PSLP) and 139–227 (TTVV…GEME). Residues 183–200 (SRCSSATSSSSGGTNVGT) are compositionally biased toward low complexity. The POU-specific domain occupies 218 to 292 (EEAPNSGEME…LLRSWLHEVE (75 aa)). The segment at residues 312–371 (KRKHRTSIENNVKCTLENYFMQCSKPSAQEIAQIARELNMEKDVVRVWFCNRRQKGKRQV) is a DNA-binding region (homeobox).

It belongs to the POU transcription factor family. Class-5 subfamily. As to quaternary structure, interacts with the transcription factors tcf7l1/tcf3 and vegt. As to expression, initially (stage 9) expressed in all regions of the embryo, becoming localized to the ventroposterior regions by early neurula stages. In adults, expressed at a low level in the brain.

It localises to the nucleus. Its function is as follows. Transcription factor that binds to the octamer motif (5'-ATTTGCAT-3'). Antagonizes the activity of nodal/activin signaling during gastrulation to suppress mesendoderm formation. The sequence is that of POU domain, class 5, transcription factor 1.2 (pou5f1.2) from Xenopus laevis (African clawed frog).